The primary structure comprises 339 residues: MNVEQVKSIDEAMGLAIEHSYQVKGTTYPKPPVGAVIVDPNGRIVGAGGTEPAGGDHAEVVALRRAGGLAAGAIVVVTMEPCNHYGKTPPCVNALIEARVGTVVYAVADPNGIAGGGAGRLSAAGLQVRSGVLAEQVAAGPLREWLHKQRTGLPHVTWKYATSIDGRSAAADGSSQWISSEAARLDLHRRRAIADAILVGTGTVLADDPALTARLADGSLAPQQPLRVVVGKRDIPPEARVLNDEARTMMIRTHEPMEVLRALSDRTDVLLEGGPTLAGAFLRAGAINRILAYVAPILLGGPVTAVDDVGVSNITNALRWQFDSVEKVGPDLLLSLVAR.

The interval 1-152 (MNVEQVKSID…REWLHKQRTG (152 aa)) is deaminase. Residues 7-129 (KSIDEAMGLA…RLSAAGLQVR (123 aa)) enclose the CMP/dCMP-type deaminase domain. H57 provides a ligand contact to Zn(2+). Residue E59 is the Proton donor of the active site. Zn(2+) contacts are provided by C82 and C91. The interval 153-339 (LPHVTWKYAT…PDLLLSLVAR (187 aa)) is reductase. NADP(+)-binding positions include A161 and 168-171 (SAAA). Substrate is bound at residue S175. NADP(+) is bound at residue W177. R191 is a substrate binding site. NADP(+) contacts are provided by T203 and D207. Residues L211, R214, and E272 each coordinate substrate. 274-280 (GPTLAGA) contributes to the NADP(+) binding site.

It in the N-terminal section; belongs to the cytidine and deoxycytidylate deaminase family. This sequence in the C-terminal section; belongs to the HTP reductase family. Zn(2+) serves as cofactor.

The catalysed reaction is 2,5-diamino-6-hydroxy-4-(5-phosphoribosylamino)-pyrimidine + H2O + H(+) = 5-amino-6-(5-phospho-D-ribosylamino)uracil + NH4(+). The enzyme catalyses 5-amino-6-(5-phospho-D-ribitylamino)uracil + NADP(+) = 5-amino-6-(5-phospho-D-ribosylamino)uracil + NADPH + H(+). The protein operates within cofactor biosynthesis; riboflavin biosynthesis; 5-amino-6-(D-ribitylamino)uracil from GTP: step 2/4. It functions in the pathway cofactor biosynthesis; riboflavin biosynthesis; 5-amino-6-(D-ribitylamino)uracil from GTP: step 3/4. Converts 2,5-diamino-6-(ribosylamino)-4(3h)-pyrimidinone 5'-phosphate into 5-amino-6-(ribosylamino)-2,4(1h,3h)-pyrimidinedione 5'-phosphate. The protein is Riboflavin biosynthesis protein RibD (ribD) of Mycobacterium tuberculosis (strain CDC 1551 / Oshkosh).